Consider the following 228-residue polypeptide: Uracil-DNA glycosylase (228 aa).

D64 functions as the Proton acceptor in the catalytic mechanism.

Belongs to the uracil-DNA glycosylase (UDG) superfamily. UNG family.

It localises to the cytoplasm. The enzyme catalyses Hydrolyzes single-stranded DNA or mismatched double-stranded DNA and polynucleotides, releasing free uracil.. In terms of biological role, excises uracil residues from the DNA which can arise as a result of misincorporation of dUMP residues by DNA polymerase or due to deamination of cytosine. This Yersinia pestis bv. Antiqua (strain Antiqua) protein is Uracil-DNA glycosylase.